The primary structure comprises 814 residues: Kexin (814 aa).

The N-terminal stretch at Met-1–Ala-19 is a signal peptide. The propeptide occupies Leu-20 to Arg-109. A glycan (N-linked (GlcNAc...) asparagine) is linked at Asn-42. A propeptide spans Leu-110–Pro-113 (removed by dipeptidylpeptidase STE13). Topologically, residues Ala-114–His-678 are lumenal. Position 135 (Asp-135) interacts with Ca(2+). Residues Gln-141 to Ile-453 form the Peptidase S8 domain. N-linked (GlcNAc...) asparagine glycosylation occurs at Asn-163. The Charge relay system role is filled by Asp-175. Asp-184 contributes to the Ca(2+) binding site. His-213 (charge relay system) is an active-site residue. The Ca(2+) site is built by Asn-227, Asp-277, Asp-320, and Glu-350. 2 disulfides stabilise this stretch: Cys-230–Cys-377 and Cys-322–Cys-352. Ser-385 acts as the Charge relay system in catalysis. Residues Asn-404 and Asn-480 are each glycosylated (N-linked (GlcNAc...) asparagine). The 135-residue stretch at Val-462–Asp-596 folds into the P/Homo B domain. Positions Pro-651 to Ser-671 are disordered. The segment covering Thr-653 to Pro-667 has biased composition (low complexity). A helical membrane pass occupies residues Tyr-679–Met-699. Residues Lys-700 to Ser-814 lie on the Cytoplasmic side of the membrane. Residues Ser-756–Ser-814 form a disordered region. Residues Asn-792–Gln-801 show a composition bias toward polar residues.

It belongs to the peptidase S8 family. Furin subfamily. Ca(2+) serves as cofactor. Post-translationally, O-glycosylated.

The protein localises to the golgi apparatus. Its subcellular location is the trans-Golgi network membrane. The enzyme catalyses Cleavage of -Lys-Arg-|-Xaa- and -Arg-Arg-|-Xaa- bonds to process yeast alpha-factor pheromone and killer toxin precursors.. In terms of biological role, processing of precursors of alpha-factors and killer toxin. The sequence is that of Kexin (KEX2) from Saccharomyces cerevisiae (strain ATCC 204508 / S288c) (Baker's yeast).